A 352-amino-acid chain; its full sequence is Selenide, water dikinase (352 aa).

Cys23 is an active-site residue. ATP-binding positions include Lys26 and 54 to 56 (SRD). A Mg(2+)-binding site is contributed by Asp57. ATP-binding positions include Asp74, Asp97, and 145-147 (GHS). Asp97 is a binding site for Mg(2+). Asp233 is a Mg(2+) binding site.

It belongs to the selenophosphate synthase 1 family. Class I subfamily. Homodimer. Requires Mg(2+) as cofactor.

The enzyme catalyses hydrogenselenide + ATP + H2O = selenophosphate + AMP + phosphate + 2 H(+). Its function is as follows. Synthesizes selenophosphate from selenide and ATP. In Shewanella sp. (strain ANA-3), this protein is Selenide, water dikinase.